The sequence spans 683 residues: Heat shock protein homolog ECU03_0520 (683 aa).

It belongs to the heat shock protein 70 family.

The protein localises to the cytoplasm. This is Heat shock protein homolog ECU03_0520 from Encephalitozoon cuniculi (strain GB-M1) (Microsporidian parasite).